A 243-amino-acid chain; its full sequence is UPF0280 protein Memar_1519 (243 aa).

The protein belongs to the UPF0280 family.

In Methanoculleus marisnigri (strain ATCC 35101 / DSM 1498 / JR1), this protein is UPF0280 protein Memar_1519.